We begin with the raw amino-acid sequence, 254 residues long: tRNA pseudouridine synthase A (254 aa).

Asp52 functions as the Nucleophile in the catalytic mechanism. Tyr110 lines the substrate pocket.

Belongs to the tRNA pseudouridine synthase TruA family. In terms of assembly, homodimer.

It carries out the reaction uridine(38/39/40) in tRNA = pseudouridine(38/39/40) in tRNA. In terms of biological role, formation of pseudouridine at positions 38, 39 and 40 in the anticodon stem and loop of transfer RNAs. This Thermodesulfovibrio yellowstonii (strain ATCC 51303 / DSM 11347 / YP87) protein is tRNA pseudouridine synthase A.